The chain runs to 315 residues: Methionyl-tRNA formyltransferase (315 aa).

Residue 113–116 participates in (6S)-5,6,7,8-tetrahydrofolate binding; sequence SLLP.

This sequence belongs to the Fmt family.

The catalysed reaction is L-methionyl-tRNA(fMet) + (6R)-10-formyltetrahydrofolate = N-formyl-L-methionyl-tRNA(fMet) + (6S)-5,6,7,8-tetrahydrofolate + H(+). Its function is as follows. Attaches a formyl group to the free amino group of methionyl-tRNA(fMet). The formyl group appears to play a dual role in the initiator identity of N-formylmethionyl-tRNA by promoting its recognition by IF2 and preventing the misappropriation of this tRNA by the elongation apparatus. The polypeptide is Methionyl-tRNA formyltransferase (Photorhabdus laumondii subsp. laumondii (strain DSM 15139 / CIP 105565 / TT01) (Photorhabdus luminescens subsp. laumondii)).